The sequence spans 189 residues: Protein GrpE (189 aa).

The segment covering 1 to 38 (MTKSNETERMEESEETHSSDIRSASESDHASGSDHTES) has biased composition (basic and acidic residues). The disordered stretch occupies residues 1-54 (MTKSNETERMEESEETHSSDIRSASESDHASGSDHTESADEIPTADAEQGELEQ).

This sequence belongs to the GrpE family. As to quaternary structure, homodimer.

The protein localises to the cytoplasm. Its function is as follows. Participates actively in the response to hyperosmotic and heat shock by preventing the aggregation of stress-denatured proteins, in association with DnaK and GrpE. It is the nucleotide exchange factor for DnaK and may function as a thermosensor. Unfolded proteins bind initially to DnaJ; upon interaction with the DnaJ-bound protein, DnaK hydrolyzes its bound ATP, resulting in the formation of a stable complex. GrpE releases ADP from DnaK; ATP binding to DnaK triggers the release of the substrate protein, thus completing the reaction cycle. Several rounds of ATP-dependent interactions between DnaJ, DnaK and GrpE are required for fully efficient folding. This Tropheryma whipplei (strain Twist) (Whipple's bacillus) protein is Protein GrpE.